Here is a 517-residue protein sequence, read N- to C-terminus: Maturase K (517 aa).

Belongs to the intron maturase 2 family. MatK subfamily.

Its subcellular location is the plastid. It localises to the chloroplast. In terms of biological role, usually encoded in the trnK tRNA gene intron. Probably assists in splicing its own and other chloroplast group II introns. The polypeptide is Maturase K (Dracula chimaera).